We begin with the raw amino-acid sequence, 130 residues long: Histone H2A type 2 (130 aa).

A disordered region spans residues 1–22 (MSGRGKQGGKTRAKSKTRSSRA). The residue at position 2 (Ser-2) is an N-acetylserine. Ser-2 bears the Phosphoserine mark. N6-(2-hydroxyisobutyryl)lysine is present on Lys-6. At Lys-6 the chain carries N6-acetyllysine. Basic residues predominate over residues 7–19 (QGGKTRAKSKTRS). At Lys-10 the chain carries N6-(2-hydroxyisobutyryl)lysine; alternate. Residue Lys-10 is modified to N6-lactoyllysine; alternate. Lys-10 is modified (N6-succinyllysine). Glycyl lysine isopeptide (Lys-Gly) (interchain with G-Cter in ubiquitin) cross-links involve residues Lys-14 and Lys-16. Residue Lys-37 is modified to N6-(2-hydroxyisobutyryl)lysine; alternate. Lys-76 is modified (N6-(2-hydroxyisobutyryl)lysine). Lys-96 carries the post-translational modification N6-(2-hydroxyisobutyryl)lysine; alternate. Residue Lys-96 is modified to N6-succinyllysine. N6-glutaryllysine; alternate is present on Lys-96. At Gln-105 the chain carries N5-methylglutamine. Lys-119 carries the post-translational modification N6-(2-hydroxyisobutyryl)lysine; alternate. An N6-glutaryllysine; alternate modification is found at Lys-119. Residue Lys-120 forms a Glycyl lysine isopeptide (Lys-Gly) (interchain with G-Cter in ubiquitin) linkage.

This sequence belongs to the histone H2A family. The nucleosome is a histone octamer containing two molecules each of H2A, H2B, H3 and H4 assembled in one H3-H4 heterotetramer and two H2A-H2B heterodimers. The octamer wraps approximately 147 bp of DNA. Monoubiquitination of Lys-120 (H2AK119Ub) gives a specific tag for epigenetic transcriptional repression. Following DNA double-strand breaks (DSBs), it is ubiquitinated through 'Lys-63' linkage of ubiquitin moieties, leading to the recruitment of repair proteins to sites of DNA damage. H2AK119Ub and ionizing radiation-induced 'Lys-63'-linked ubiquitination are distinct events. Post-translationally, phosphorylation on Ser-2 is enhanced during mitosis. Phosphorylation on Ser-2 directly represses transcription. In terms of processing, glutamine methylation at Gln-105 (H2AQ104me) by FBL is specifically dedicated to polymerase I. It is present at 35S ribosomal DNA locus and impairs binding of the FACT complex.

It localises to the nucleus. The protein resides in the chromosome. In terms of biological role, core component of nucleosome. Nucleosomes wrap and compact DNA into chromatin, limiting DNA accessibility to the cellular machineries which require DNA as a template. Histones thereby play a central role in transcription regulation, DNA repair, DNA replication and chromosomal stability. DNA accessibility is regulated via a complex set of post-translational modifications of histones, also called histone code, and nucleosome remodeling. This chain is Histone H2A type 2, found in Xenopus laevis (African clawed frog).